The chain runs to 115 residues: MSNIIKQLEQEQLRTDIPAFAQGDTVRVQVRVIEGGKERLQAFEGIVIAKRNRGLHSAFTVRKISNGEGVERVFQTHSPLIASVELKRRGDVRRAKLYYLRNLSGKAARIKEKLN.

Belongs to the bacterial ribosomal protein bL19 family.

This protein is located at the 30S-50S ribosomal subunit interface and may play a role in the structure and function of the aminoacyl-tRNA binding site. This chain is Large ribosomal subunit protein bL19, found in Tolumonas auensis (strain DSM 9187 / NBRC 110442 / TA 4).